The chain runs to 288 residues: N-acetylneuraminate lyase (288 aa).

Ser-44 and Thr-45 together coordinate aceneuramate. Tyr-133 serves as the catalytic Proton donor. The active-site Schiff-base intermediate with substrate is Lys-161. Residues Thr-163, Gly-185, Asp-187, Glu-188, and Ser-204 each contribute to the aceneuramate site.

The protein belongs to the DapA family. NanA subfamily. As to quaternary structure, homotetramer.

The protein resides in the cytoplasm. It carries out the reaction aceneuramate = aldehydo-N-acetyl-D-mannosamine + pyruvate. It functions in the pathway amino-sugar metabolism; N-acetylneuraminate degradation; D-fructose 6-phosphate from N-acetylneuraminate: step 1/5. Functionally, catalyzes the reversible aldol cleavage of N-acetylneuraminic acid (sialic acid; Neu5Ac) to form pyruvate and N-acetylmannosamine (ManNAc) via a Schiff base intermediate. This chain is N-acetylneuraminate lyase, found in Clostridium perfringens (strain ATCC 13124 / DSM 756 / JCM 1290 / NCIMB 6125 / NCTC 8237 / Type A).